Consider the following 142-residue polypeptide: Transcriptional regulator MraZ (142 aa).

SpoVT-AbrB domains follow at residues 5 to 51 (ASAL…PRPE) and 77 to 120 (AMDV…DAQT).

The protein belongs to the MraZ family. As to quaternary structure, forms oligomers.

It is found in the cytoplasm. Its subcellular location is the nucleoid. This is Transcriptional regulator MraZ from Paraburkholderia xenovorans (strain LB400).